An 87-amino-acid chain; its full sequence is Small ribosomal subunit protein uS17 (87 aa).

Belongs to the universal ribosomal protein uS17 family. As to quaternary structure, part of the 30S ribosomal subunit.

Its function is as follows. One of the primary rRNA binding proteins, it binds specifically to the 5'-end of 16S ribosomal RNA. This Bacillus pumilus (strain SAFR-032) protein is Small ribosomal subunit protein uS17.